The chain runs to 145 residues: Trafficking protein particle complex subunit 1 (145 aa).

The protein belongs to the TRAPP small subunits family. BET5 subfamily. Part of the multisubunit transport protein particle (TRAPP) complex. The heterodimer TRAPPC6B-TRAPPC3 interacts with TRAPPC1 likely providing a core for TRAPP complex formation.

The protein localises to the golgi apparatus. The protein resides in the cis-Golgi network. Its subcellular location is the endoplasmic reticulum. Its function is as follows. May play a role in vesicular transport from endoplasmic reticulum to Golgi. The polypeptide is Trafficking protein particle complex subunit 1 (Mus musculus (Mouse)).